The chain runs to 371 residues: MDYDLIVIGSGSVGSAAGYYASQAGLNVLMIDSAMPPHQAGSHHGETRIMRHAYGEGEKYVPLVLRAQALWDQLAAQTGEKLFQACGVINLGPDNSTFLQNVQRSAQQYDLPVETLNSTQIREKWPVFTVPDNYIAVFEPQSGYLRSELAVKTLIKAVTEAGCGILFNCPVTAIESHQAGVDVVTIDGTYSATKVVVTAGTWVKELLPTLPVTPVRKVFSWHQADGRYSEANHFPAFTVEMPDNILYYGFPAQNDALKLGKHHGGQLIESAAQRKPFGRYAEDGTEVFSFLRHFLPGVGVCLRGEACSYDMSPDEDFIIDTLPEDERVMVVSGLSGHGFKFATALGEVAALFAQDKPSPIDISAFSLARFR.

Asp-4–Ala-34 lines the FAD pocket. Cys-307 bears the S-8alpha-FAD cysteine mark.

It belongs to the MSOX/MTOX family. MTOX subfamily. In terms of assembly, monomer. Requires FAD as cofactor.

The enzyme catalyses N(alpha)-methyl-L-tryptophan + O2 + H2O = L-tryptophan + formaldehyde + H2O2. Functionally, catalyzes the oxidative demethylation of N-methyl-L-tryptophan. The protein is N-methyl-L-tryptophan oxidase of Yersinia pseudotuberculosis serotype O:1b (strain IP 31758).